We begin with the raw amino-acid sequence, 278 residues long: Putative phosphoenolpyruvate synthase regulatory protein (278 aa).

157–164 (GVSRSGKT) serves as a coordination point for ADP.

The protein belongs to the pyruvate, phosphate/water dikinase regulatory protein family. PSRP subfamily.

The enzyme catalyses [pyruvate, water dikinase] + ADP = [pyruvate, water dikinase]-phosphate + AMP + H(+). The catalysed reaction is [pyruvate, water dikinase]-phosphate + phosphate + H(+) = [pyruvate, water dikinase] + diphosphate. Bifunctional serine/threonine kinase and phosphorylase involved in the regulation of the phosphoenolpyruvate synthase (PEPS) by catalyzing its phosphorylation/dephosphorylation. The sequence is that of Putative phosphoenolpyruvate synthase regulatory protein from Vibrio parahaemolyticus serotype O3:K6 (strain RIMD 2210633).